Here is a 306-residue protein sequence, read N- to C-terminus: UDP-N-acetylenolpyruvoylglucosamine reductase (306 aa).

One can recognise an FAD-binding PCMH-type domain in the interval 25 to 188 (RVGGPADWLF…IEARFRAEPG (164 aa)). Arg-168 is a catalytic residue. Residues 199–214 (EQLARRDASQPTKDRS) are compositionally biased toward basic and acidic residues. Positions 199–232 (EQLARRDASQPTKDRSAGSTFRNPAGYSSTGRAD) are disordered. Residues 215–229 (AGSTFRNPAGYSSTG) show a composition bias toward polar residues. The active-site Proton donor is Ser-217. The active site involves Glu-299.

This sequence belongs to the MurB family. Requires FAD as cofactor.

The protein localises to the cytoplasm. It catalyses the reaction UDP-N-acetyl-alpha-D-muramate + NADP(+) = UDP-N-acetyl-3-O-(1-carboxyvinyl)-alpha-D-glucosamine + NADPH + H(+). The protein operates within cell wall biogenesis; peptidoglycan biosynthesis. Its function is as follows. Cell wall formation. This Paracoccus denitrificans (strain Pd 1222) protein is UDP-N-acetylenolpyruvoylglucosamine reductase.